The primary structure comprises 82 residues: Cytochrome c oxidase subunit 8, mitochondrial (82 aa).

The N-terminal 31 residues, 1 to 31, are a transit peptide targeting the mitochondrion; the sequence is MFSRVALRAAPRQQPFSLVARRTFQTTRAQL. Residues 32–52 are Mitochondrial matrix-facing; it reads SSPYHYPEGPRSNLPFNPKTR. A helical membrane pass occupies residues 53–75; the sequence is FFWFRYLMYCVVGFGSPVAIAVW. The Mitochondrial intermembrane segment spans residues 76-82; that stretch reads QTYRPRS.

It belongs to the cytochrome c oxidase VIIc family. In terms of assembly, component of the cytochrome c oxidase (complex IV, CIV), a multisubunit enzyme composed of 11 subunits. The complex is composed of a catalytic core of 3 subunits Cox1, Cox2 and Cox3, encoded in the mitochondrial DNA, and 8 supernumerary subunits Cox4, Cox5a/Cox5, Cox6, Cox7, Cox8, Cox7a/Cox9, Cox6b/Cox12 and Cox6a/Cox13, which are encoded in the nuclear genome. The complex exists as a monomer or a dimer and forms respiratory supercomplexes (SCs) in the inner mitochondrial membrane with NADH-ubiquinone oxidoreductase (complex I, CI) and ubiquinol-cytochrome c oxidoreductase (cytochrome b-c1 complex, complex III, CIII), resulting in various different assemblies (supercomplexes I(1)IV(1), I(1)III(3)IV(2), III(2)IV(1) and III(2)IV(2) as well as larger supercomplexes of compositions like I(1)III(2)IV(5-6)).

The protein localises to the mitochondrion inner membrane. The protein operates within energy metabolism; oxidative phosphorylation. Functionally, component of the cytochrome c oxidase, the last enzyme in the mitochondrial electron transport chain which drives oxidative phosphorylation. The respiratory chain contains 3 multisubunit complexes succinate dehydrogenase (complex II, CII), ubiquinol-cytochrome c oxidoreductase (cytochrome b-c1 complex, complex III, CIII) and cytochrome c oxidase (complex IV, CIV), that cooperate to transfer electrons derived from NADH and succinate to molecular oxygen, creating an electrochemical gradient over the inner membrane that drives transmembrane transport and the ATP synthase. Cytochrome c oxidase is the component of the respiratory chain that catalyzes the reduction of oxygen to water. Electrons originating from reduced cytochrome c in the intermembrane space (IMS) are transferred via the dinuclear copper A center (CU(A)) of Cox2 and heme A of Cox1 to the active site in Cox1, a binuclear center (BNC) formed by heme A3 and copper B (CU(B)). The BNC reduces molecular oxygen to 2 water molecules using 4 electrons from cytochrome c in the IMS and 4 protons from the mitochondrial matrix. The polypeptide is Cytochrome c oxidase subunit 8, mitochondrial (cox-15) (Neurospora crassa (strain ATCC 24698 / 74-OR23-1A / CBS 708.71 / DSM 1257 / FGSC 987)).